Reading from the N-terminus, the 475-residue chain is UDP-N-acetylmuramate--L-alanine ligase (475 aa).

Residue 112-118 (GTHGKTT) participates in ATP binding.

This sequence belongs to the MurCDEF family.

It is found in the cytoplasm. The catalysed reaction is UDP-N-acetyl-alpha-D-muramate + L-alanine + ATP = UDP-N-acetyl-alpha-D-muramoyl-L-alanine + ADP + phosphate + H(+). The protein operates within cell wall biogenesis; peptidoglycan biosynthesis. In terms of biological role, cell wall formation. In Methylobacillus flagellatus (strain ATCC 51484 / DSM 6875 / VKM B-1610 / KT), this protein is UDP-N-acetylmuramate--L-alanine ligase.